A 275-amino-acid chain; its full sequence is Large ribosomal subunit protein uL2c (275 aa).

The disordered stretch occupies residues 222 to 258 (GSAMNPVDHPHGGGEGRAPIGRARPVSPWGRPALGAK).

The protein belongs to the universal ribosomal protein uL2 family. As to quaternary structure, part of the 50S ribosomal subunit.

The protein localises to the plastid. The protein resides in the chloroplast. This chain is Large ribosomal subunit protein uL2c (rpl2), found in Chlorella vulgaris (Green alga).